A 194-amino-acid polypeptide reads, in one-letter code: Probable GTP-binding protein EngB (194 aa).

An EngB-type G domain is found at 23 to 194 (DKMEFAFVGR…LNFMEEKLNN (172 aa)). GTP-binding positions include 31–38 (GRSNVGKS), 58–62 (GRTQL), 76–79 (DLPG), 142–145 (TKID), and 173–175 (HSS). The Mg(2+) site is built by Ser38 and Thr60.

It belongs to the TRAFAC class TrmE-Era-EngA-EngB-Septin-like GTPase superfamily. EngB GTPase family. Mg(2+) is required as a cofactor.

Its function is as follows. Necessary for normal cell division and for the maintenance of normal septation. In Fusobacterium nucleatum subsp. nucleatum (strain ATCC 25586 / DSM 15643 / BCRC 10681 / CIP 101130 / JCM 8532 / KCTC 2640 / LMG 13131 / VPI 4355), this protein is Probable GTP-binding protein EngB.